Consider the following 108-residue polypeptide: MSGISLTPVKQENEPCSFLRHDSGSTQAVNDTYVDRARPSADAKEHCAASDPEEWHSGDRPPRLCRKPSRFYRRIVIPETAPVLSPRYDLSDEPHAPGTTMISGPRTQ.

Residues 1–10 (MSGISLTPVK) are compositionally biased toward polar residues. 2 disordered regions span residues 1-63 (MSGI…RPPR) and 83-108 (VLSPRYDLSDEPHAPGTTMISGPRTQ). Basic and acidic residues predominate over residues 33–62 (YVDRARPSADAKEHCAASDPEEWHSGDRPP).

This is an uncharacterized protein from Gallid herpesvirus 2 (strain Chicken/Md5/ATCC VR-987) (GaHV-2).